A 272-amino-acid polypeptide reads, in one-letter code: MKRTAFFISDGTGITAETLGQSLLAQFDSIPFNKFTRPYIDTPDKARTMVQQINAAAERDGMRPIIFDTIVNQDIREILATSNGFMIDIFSTFLSPLEQELTAHSSYSVGKSHSIGGNSNYMERIEAVNFALDNDDGARTHYYDKADLILVGVSRCGKTPTCLYMAMQFGIRAANYPLTEDDMERLQLPAVLKKHHNKLFGLTIDPDRLTAIRHERKPNSRYSSFAQCEFEVREVESLFRRENIPNINSTHFSVEEISAKILVEKGVERRFK.

152 to 159 (GVSRCGKT) is an ADP binding site.

This sequence belongs to the pyruvate, phosphate/water dikinase regulatory protein family. PSRP subfamily.

The enzyme catalyses [pyruvate, water dikinase] + ADP = [pyruvate, water dikinase]-phosphate + AMP + H(+). It catalyses the reaction [pyruvate, water dikinase]-phosphate + phosphate + H(+) = [pyruvate, water dikinase] + diphosphate. Bifunctional serine/threonine kinase and phosphorylase involved in the regulation of the phosphoenolpyruvate synthase (PEPS) by catalyzing its phosphorylation/dephosphorylation. In Pseudomonas putida (strain W619), this protein is Putative phosphoenolpyruvate synthase regulatory protein.